Reading from the N-terminus, the 172-residue chain is Lipoprotein signal peptidase (172 aa).

3 helical membrane passes run 10–30, 68–88, and 98–118; these read LIWLLLSALVVGLDQWSKAWV, WQLWFFTALAVGISGLLAFWL, and SALPYALVIGGAIGNVIDRLM. Catalysis depends on residues Asp-124 and Asp-142. Residues 138 to 158 traverse the membrane as a helical segment; sequence FNIADSAIVGGAIGIAVFGLF.

It belongs to the peptidase A8 family.

Its subcellular location is the cell inner membrane. The enzyme catalyses Release of signal peptides from bacterial membrane prolipoproteins. Hydrolyzes -Xaa-Yaa-Zaa-|-(S,diacylglyceryl)Cys-, in which Xaa is hydrophobic (preferably Leu), and Yaa (Ala or Ser) and Zaa (Gly or Ala) have small, neutral side chains.. Its pathway is protein modification; lipoprotein biosynthesis (signal peptide cleavage). In terms of biological role, this protein specifically catalyzes the removal of signal peptides from prolipoproteins. The protein is Lipoprotein signal peptidase of Xanthomonas axonopodis pv. citri (strain 306).